An 86-amino-acid polypeptide reads, in one-letter code: MAEKRKYSKKYCKYTEAKVEFIDYKDTTLLKYCLSERFKIMPRRLTGTSKKYQEMVEKAIKRARHVALIPYIVDRDNVVTNPFEGM.

The protein belongs to the bacterial ribosomal protein bS18 family. As to quaternary structure, part of the 30S ribosomal subunit. Forms a tight heterodimer with protein bS6.

Functionally, binds as a heterodimer with protein bS6 to the central domain of the 16S rRNA, where it helps stabilize the platform of the 30S subunit. This Campylobacter fetus subsp. fetus (strain 82-40) protein is Small ribosomal subunit protein bS18.